The primary structure comprises 495 residues: NADP/NAD-dependent aldehyde dehydrogenase PuuC (495 aa).

NAD(+) is bound at residue 244-249; sequence GSTRTG. Residues Glu267 and Cys302 contribute to the active site.

It belongs to the aldehyde dehydrogenase family.

It carries out the reaction an aldehyde + NADP(+) + H2O = a carboxylate + NADPH + 2 H(+). It catalyses the reaction an aldehyde + NAD(+) + H2O = a carboxylate + NADH + 2 H(+). The catalysed reaction is 4-(gamma-L-glutamylamino)butanal + NADP(+) + H2O = 4-(gamma-L-glutamylamino)butanoate + NADPH + 2 H(+). The enzyme catalyses 4-(gamma-L-glutamylamino)butanal + NAD(+) + H2O = 4-(gamma-L-glutamylamino)butanoate + NADH + 2 H(+). It participates in amine and polyamine degradation; putrescine degradation; 4-aminobutanoate from putrescine: step 3/4. Its activity is regulated as follows. Lithium ions exhibits the highest inhibition (97%). To a lesser extent (5-20%), potassium, sodium, and ammonium ions also inhibit PuuC activity. Transition metals, such as copper and zinc ions inhibit PuuC activity by more than 90%. The presence of heavy metals (mercury, silver) or sodium hydrogensulfite in the reaction mixture completely inactivate PuuC; in contrast, disulfide reductants such as DTT and 2-mercaptoethanol significantly increase its activity by 75% and 27%, respectively. Catalyzes the oxidation of 3-hydroxypropionaldehyde (3-HPA) to 3-hydroxypropionic acid (3-HP). It acts preferentially with NAD but can also use NADP. 3-HPA appears to be the most suitable substrate for PuuC followed by isovaleraldehyde, propionaldehyde, butyraldehyde, and valeraldehyde. It might play a role in propionate and/or acetic acid metabolisms. Also involved in the breakdown of putrescine through the oxidation of gamma-Glu-gamma-aminobutyraldehyde to gamma-Glu-gamma-aminobutyrate (gamma-Glu-GABA). The sequence is that of NADP/NAD-dependent aldehyde dehydrogenase PuuC from Escherichia coli (strain K12).